Here is a 48-residue protein sequence, read N- to C-terminus: FRGLAKLLKIGLKSFARVLKKVLPKAAKAGKALAKSLADENAIRQQNQ.

The protein resides in the secreted. The protein localises to the target cell membrane. In terms of biological role, disrupts cell membranes, particularly those rich in phosphocholine, through formation of pores. Has antimicrobial activity, hemolytic activity and insecticidal activity. The chain is M-oxotoxin-Ot1b from Oxyopes takobius (Lynx spider).